The sequence spans 483 residues: Regulatory protein ViaA (483 aa).

This sequence belongs to the ViaA family. In terms of assembly, homodimer. Interacts with RavA.

The protein resides in the cytoplasm. Functionally, component of the RavA-ViaA chaperone complex, which may act on the membrane to optimize the function of some of the respiratory chains. ViaA stimulates the ATPase activity of RavA. This chain is Regulatory protein ViaA, found in Escherichia coli (strain 55989 / EAEC).